A 330-amino-acid chain; its full sequence is 3'-5' exonuclease (330 aa).

A disordered region spans residues Met1 to Ile92. 2 stretches are compositionally biased toward basic and acidic residues: residues Asn27 to Ile39 and Lys48 to Pro66. Ser79 and Ser87 each carry phosphoserine. Residues Ser117–Glu289 form the 3'-5' exonuclease domain. 3 residues coordinate Mg(2+): Asp139, Glu141, and Asp277.

The protein belongs to the WRNexo family.

Its subcellular location is the nucleus. In terms of biological role, has exonuclease activity on both single-stranded and duplex templates bearing overhangs, but not blunt ended duplex DNA, and cleaves in a 3'-5' direction. Essential for the formation of DNA replication focal centers. Has an important role in maintaining genome stability. In Drosophila virilis (Fruit fly), this protein is 3'-5' exonuclease.